Reading from the N-terminus, the 469-residue chain is 3-isopropylmalate dehydratase large subunit (469 aa).

3 residues coordinate [4Fe-4S] cluster: Cys-347, Cys-410, and Cys-413.

It belongs to the aconitase/IPM isomerase family. LeuC type 1 subfamily. In terms of assembly, heterodimer of LeuC and LeuD. The cofactor is [4Fe-4S] cluster.

It carries out the reaction (2R,3S)-3-isopropylmalate = (2S)-2-isopropylmalate. The protein operates within amino-acid biosynthesis; L-leucine biosynthesis; L-leucine from 3-methyl-2-oxobutanoate: step 2/4. Its function is as follows. Catalyzes the isomerization between 2-isopropylmalate and 3-isopropylmalate, via the formation of 2-isopropylmaleate. The protein is 3-isopropylmalate dehydratase large subunit of Burkholderia ambifaria (strain MC40-6).